Here is a 270-residue protein sequence, read N- to C-terminus: Protein-ADP-ribose hydrolase (270 aa).

Residues 73–267 (VSVKDCQKTN…LYDTYLQKEN (195 aa)) enclose the Macro domain. Positions 92, 93, and 106 each coordinate ADP-D-ribose. Cysteine 112, histidine 117, and cysteine 119 together coordinate Zn(2+). Residues cysteine 119, isoleucine 120, aspartate 121, serine 212, threonine 213, glycine 214, glutamate 215, and phenylalanine 216 each contribute to the ADP-D-ribose site.

This sequence belongs to the MacroD-type family. Zn-Macro subfamily. The cofactor is Zn(2+).

The enzyme catalyses 4-O-(ADP-D-ribosyl)-L-aspartyl-[protein] + H2O = L-aspartyl-[protein] + ADP-D-ribose + H(+). Functionally, ADP-ribosylhydrolase that specifically reverses the SirTM-mediated mono-ADP-ribosylation at an asparatate residue of GcvH-L, by releasing ADP-ribose from the target protein. May play a role in the regulation of the response to host-induced oxidative stress. This Streptococcus pyogenes serotype M1 protein is Protein-ADP-ribose hydrolase.